We begin with the raw amino-acid sequence, 204 residues long: Methylthioribulose-1-phosphate dehydratase (204 aa).

Positions 95 and 97 each coordinate Zn(2+).

The protein belongs to the aldolase class II family. MtnB subfamily. Zn(2+) is required as a cofactor.

The catalysed reaction is 5-(methylsulfanyl)-D-ribulose 1-phosphate = 5-methylsulfanyl-2,3-dioxopentyl phosphate + H2O. The protein operates within amino-acid biosynthesis; L-methionine biosynthesis via salvage pathway; L-methionine from S-methyl-5-thio-alpha-D-ribose 1-phosphate: step 2/6. In terms of biological role, catalyzes the dehydration of methylthioribulose-1-phosphate (MTRu-1-P) into 2,3-diketo-5-methylthiopentyl-1-phosphate (DK-MTP-1-P). The chain is Methylthioribulose-1-phosphate dehydratase from Parvibaculum lavamentivorans (strain DS-1 / DSM 13023 / NCIMB 13966).